Consider the following 173-residue polypeptide: T-complex protein 1 subunit alpha (173 aa).

This sequence belongs to the TCP-1 chaperonin family. Component of the chaperonin-containing T-complex (TRiC), a heterooligomeric complex of about 850 to 900 kDa that forms two stacked rings, 12 to 16 nm in diameter.

It is found in the cytoplasm. The protein localises to the cytosol. Its function is as follows. Component of the chaperonin-containing T-complex (TRiC), a molecular chaperone complex that assists the folding of proteins upon ATP hydrolysis. The protein is T-complex protein 1 subunit alpha of Ambystoma mexicanum (Axolotl).